The sequence spans 145 residues: Basic phospholipase A2 cL038 (145 aa).

A signal peptide spans 1–21 (MYPAHLLVLLAVCVSLLGASA). Residues 22 to 27 (IPPLPL) constitute a propeptide that is removed on maturation. Intrachain disulfides connect C38–C98, C54–C144, C56–C72, C71–C125, C78–C118, C87–C111, and C105–C116. Ca(2+) is bound by residues Y55, G57, and G59. H75 is a catalytic residue. Position 76 (D76) interacts with Ca(2+). D119 is an active-site residue.

Belongs to the phospholipase A2 family. Group I subfamily. D49 sub-subfamily. The cofactor is Ca(2+). In terms of tissue distribution, expressed by the venom gland.

Its subcellular location is the secreted. It carries out the reaction a 1,2-diacyl-sn-glycero-3-phosphocholine + H2O = a 1-acyl-sn-glycero-3-phosphocholine + a fatty acid + H(+). Its function is as follows. PLA2 catalyzes the calcium-dependent hydrolysis of the 2-acyl groups in 3-sn-phosphoglycerides. The protein is Basic phospholipase A2 cL038 of Laticauda semifasciata (Black-banded sea krait).